Reading from the N-terminus, the 352-residue chain is Zinc finger CCCH domain-containing protein 42 (352 aa).

The RRM domain maps to 36 to 114 (AYVYVGGIPF…RTIKVDHCGA (79 aa)). 2 consecutive C3H1-type zinc fingers follow at residues 130-157 (REARGVCRAFQRGECTRGDSCKFSHDEK) and 180-207 (REGRGVCRAFQRGECTRGDSCKFSHDEK). A disordered region spans residues 156 to 179 (EKRAANTGWGHEEDRSSKWDHDKN). Basic and acidic residues-rich tracts occupy residues 210-230 (ATTGWGHEEDRSSKWDQDKLN), 243-296 (GDFK…RSGR), and 304-352 (RHND…DRRR). Residues 210–352 (ATTGWGHEED…DSLRREDRRR (143 aa)) form a disordered region. The stretch at 319-348 (RAQDWEKRKAESRRDRNDREEKDRDSLRRE) forms a coiled coil.

The sequence is that of Zinc finger CCCH domain-containing protein 42 from Arabidopsis thaliana (Mouse-ear cress).